The sequence spans 319 residues: 4-diphosphocytidyl-2-C-methyl-D-erythritol kinase (319 aa).

Lys-21 is a catalytic residue. ATP is bound at residue 106–116 (PIGAGLAGGSS). Residue Asp-148 is part of the active site.

The protein belongs to the GHMP kinase family. IspE subfamily.

The enzyme catalyses 4-CDP-2-C-methyl-D-erythritol + ATP = 4-CDP-2-C-methyl-D-erythritol 2-phosphate + ADP + H(+). It functions in the pathway isoprenoid biosynthesis; isopentenyl diphosphate biosynthesis via DXP pathway; isopentenyl diphosphate from 1-deoxy-D-xylulose 5-phosphate: step 3/6. Catalyzes the phosphorylation of the position 2 hydroxy group of 4-diphosphocytidyl-2C-methyl-D-erythritol. This is 4-diphosphocytidyl-2-C-methyl-D-erythritol kinase from Prochlorococcus marinus (strain SARG / CCMP1375 / SS120).